The sequence spans 46 residues: MVEYKCLNCKKIIKLEELGKRARCPHCSYKILVKLRPKVVKHVKAR.

Zn(2+) is bound by residues cysteine 9, cysteine 24, and cysteine 27.

The protein belongs to the archaeal Rpo12/eukaryotic RPC10 RNA polymerase subunit family. Part of the RNA polymerase complex. Interacts with Rpo3. Forms an Rpo3-Rpo10-Rpo11-Rpo12 complex upon coexpression. It depends on Zn(2+) as a cofactor.

The protein resides in the cytoplasm. The catalysed reaction is RNA(n) + a ribonucleoside 5'-triphosphate = RNA(n+1) + diphosphate. DNA-dependent RNA polymerase (RNAP) catalyzes the transcription of DNA into RNA using the four ribonucleoside triphosphates as substrates. This Methanocaldococcus jannaschii (strain ATCC 43067 / DSM 2661 / JAL-1 / JCM 10045 / NBRC 100440) (Methanococcus jannaschii) protein is DNA-directed RNA polymerase subunit Rpo12.